The sequence spans 438 residues: MNTTVYALATPAGRSGVAVIRLSGGGAGGMLDALAGLPRPQPRMATLRALRDSGGSVMDRGLVLWFPGPGSFTGEDSAEFHVHGGPAVIDAVLSALDEAGAHPAEAGEFTRRAFENEKIDLTEAEGLADLIDAETEGQRVQALSQMSGSLRRLYDGWRDALITAMASIEGEIDFPDEADVPDALSHAAYEPLSELIGSMFEHLDDGRRGERIRIGFSIVLIGAPNAGKSSLLNCLARRDAAIVTDIPGTTRDIVEVQLTLGGFPVVISDTAGLREAVDAIEAEGVRRALDRAEHADLRIGVADARSDEELVDLEGRLTDGDLLVLNKLDLGLVSERDGAYRLSAKSGDGVEALEARIEQIVRDRLSVREMPALSRVRHRRAVETALEALSRCRDQLADAPELAGEDARLAVRALESLTGRVDVEDILDRVFSQFCIGK.

(6S)-5-formyl-5,6,7,8-tetrahydrofolate is bound by residues Arg21, Glu79, and Lys118. The region spanning 215 to 362 (GFSIVLIGAP…LEARIEQIVR (148 aa)) is the TrmE-type G domain. Asn225 contributes to the K(+) binding site. GTP-binding positions include 225–230 (NAGKSS), 244–250 (TDIPGTT), and 269–272 (DTAG). Mg(2+) is bound at residue Ser229. The K(+) site is built by Thr244, Ile246, and Thr249. Thr250 lines the Mg(2+) pocket. Lys438 contacts (6S)-5-formyl-5,6,7,8-tetrahydrofolate.

The protein belongs to the TRAFAC class TrmE-Era-EngA-EngB-Septin-like GTPase superfamily. TrmE GTPase family. Homodimer. Heterotetramer of two MnmE and two MnmG subunits. Requires K(+) as cofactor.

The protein resides in the cytoplasm. Exhibits a very high intrinsic GTPase hydrolysis rate. Involved in the addition of a carboxymethylaminomethyl (cmnm) group at the wobble position (U34) of certain tRNAs, forming tRNA-cmnm(5)s(2)U34. This is tRNA modification GTPase MnmE from Maricaulis maris (strain MCS10) (Caulobacter maris).